A 643-amino-acid polypeptide reads, in one-letter code: Threonine--tRNA ligase (643 aa).

A TGS domain is found at 1 to 61 (MPIITLPDGA…SVNANINIIT (61 aa)). Residues 242 to 533 (DHRKIGKKLD…LIEEYEGKFP (292 aa)) are catalytic. 3 residues coordinate Zn(2+): Cys333, His384, and His510.

This sequence belongs to the class-II aminoacyl-tRNA synthetase family. Homodimer. Requires Zn(2+) as cofactor.

It localises to the cytoplasm. It catalyses the reaction tRNA(Thr) + L-threonine + ATP = L-threonyl-tRNA(Thr) + AMP + diphosphate + H(+). Catalyzes the attachment of threonine to tRNA(Thr) in a two-step reaction: L-threonine is first activated by ATP to form Thr-AMP and then transferred to the acceptor end of tRNA(Thr). Also edits incorrectly charged L-seryl-tRNA(Thr). This is Threonine--tRNA ligase from Prochlorococcus marinus (strain SARG / CCMP1375 / SS120).